Here is a 265-residue protein sequence, read N- to C-terminus: 5'-nucleotidase SurE (265 aa).

Positions 8, 9, 40, and 98 each coordinate a divalent metal cation.

Belongs to the SurE nucleotidase family. Requires a divalent metal cation as cofactor.

It localises to the cytoplasm. The enzyme catalyses a ribonucleoside 5'-phosphate + H2O = a ribonucleoside + phosphate. In terms of biological role, nucleotidase that shows phosphatase activity on nucleoside 5'-monophosphates. The protein is 5'-nucleotidase SurE of Trichormus variabilis (strain ATCC 29413 / PCC 7937) (Anabaena variabilis).